The primary structure comprises 273 residues: Bidirectional sugar transporter SWEET1a (273 aa).

Topologically, residues 1-6 are extracellular; that stretch reads MEHIAR. Residues 7-27 form a helical membrane-spanning segment; the sequence is FFFGVSGNVIALFLFLSPVVT. Positions 7–95 constitute a MtN3/slv 1 domain; that stretch reads FFFGVSGNVI…VIFLIFAERK (89 aa). The Cytoplasmic portion of the chain corresponds to 28-42; that stretch reads FWRIIKKRSTEDFSG. The helical transmembrane segment at 43-63 threads the bilayer; sequence VPYNMTLLNCLLSAWYGLPFV. Over 64-71 the chain is Extracellular; it reads SPNNILVT. A helical transmembrane segment spans residues 72 to 92; the sequence is TINGTGSVIEAIYVVIFLIFA. Topologically, residues 93–101 are cytoplasmic; it reads ERKARLKMM. Residues 102–122 form a helical membrane-spanning segment; sequence GLLGLVTSIFTMVVLVSLLAL. At 123–128 the chain is on the extracellular side; sequence HGQGRK. The helical transmembrane segment at 129-149 threads the bilayer; the sequence is LFCGLAATIFSICMYASPLSI. Positions 131 to 214 constitute a MtN3/slv 2 domain; the sequence is CGLAATIFSI…ILYAIYRNHK (84 aa). The Cytoplasmic portion of the chain corresponds to 150–163; the sequence is MRLVIKTKSVEFMP. The helical transmembrane segment at 164–184 threads the bilayer; the sequence is FLLSLSVFLCGTSWFIYGLLG. At 185–188 the chain is on the extracellular side; sequence RDPF. A helical membrane pass occupies residues 189–209; it reads IAIPNGCGSFLGLMQLILYAI. The Cytoplasmic portion of the chain corresponds to 210-273; the sequence is YRNHKGATPA…SADDKVASQV (64 aa).

It belongs to the SWEET sugar transporter family. In terms of assembly, forms homooligomers and/or heterooligomers.

The protein localises to the cell membrane. In terms of biological role, mediates both low-affinity uptake and efflux of sugar across the plasma membrane. The polypeptide is Bidirectional sugar transporter SWEET1a (SWEET1A) (Oryza sativa subsp. japonica (Rice)).